Consider the following 242-residue polypeptide: DNA repair protein RecO (242 aa).

Belongs to the RecO family.

Functionally, involved in DNA repair and RecF pathway recombination. The chain is DNA repair protein RecO from Nitrosospira multiformis (strain ATCC 25196 / NCIMB 11849 / C 71).